The sequence spans 60 residues: Small ribosomal subunit protein uS10 (60 aa).

The protein belongs to the universal ribosomal protein uS10 family.

This chain is Small ribosomal subunit protein uS10 (RPS20), found in Zea mays (Maize).